Consider the following 425-residue polypeptide: Fe(2+) transport protein 3, chloroplastic (425 aa).

The chain crosses the membrane as a helical span at residues F65–G85. Over R86–L97 the chain is Cytoplasmic. Residues F98 to L118 traverse the membrane as a helical segment. At A119–K137 the chain is on the lumenal side. The helical transmembrane segment at F138–M158 threads the bilayer. Topologically, residues G159–H269 are cytoplasmic. A helical membrane pass occupies residues I270–S290. The Lumenal portion of the chain corresponds to L291 to R301. Residues P302–I322 traverse the membrane as a helical segment. Over S323–T333 the chain is Cytoplasmic. Residues I334 to A354 form a helical membrane-spanning segment. Over S355–G369 the chain is Lumenal. The chain crosses the membrane as a helical span at residues I370–A390. Residues D391 to Q404 lie on the Cytoplasmic side of the membrane. A helical transmembrane segment spans residues I405–A425.

It belongs to the ZIP transporter (TC 2.A.5) family.

It is found in the plastid. The protein localises to the chloroplast thylakoid membrane. In terms of biological role, may play a role in the transport of iron in the plastids. This Arabidopsis thaliana (Mouse-ear cress) protein is Fe(2+) transport protein 3, chloroplastic (IRT3).